A 365-amino-acid polypeptide reads, in one-letter code: Protein AC54 (365 aa).

As to quaternary structure, interacts with C42 and VP80. Interacts with protein 38K.

It is found in the virion. Structural protein that participates in nucleocapsid assembly. Plays an essential role in the proper localization of the major capsid protein VP39, and the minor capsid protein 38K into the capsid assembly site. The protein is Protein AC54 (AC54) of Lepidoptera (butterflies and moths).